Here is a 608-residue protein sequence, read N- to C-terminus: Phosphoenolpyruvate carboxykinase [GTP] (608 aa).

Substrate-binding positions include arginine 82 and 222-224; that span reads YGG. Positions 231 and 251 each coordinate Mn(2+). A substrate-binding site is contributed by serine 273. 274 to 279 provides a ligand contact to GTP; it reads ACGKTN. Residue cysteine 275 is part of the active site. Aspartate 298 serves as a coordination point for Mn(2+). Substrate is bound at residue 389–391; that stretch reads NSR. GTP contacts are provided by residues arginine 391, arginine 422, and 517-520; that span reads FGDN.

This sequence belongs to the phosphoenolpyruvate carboxykinase [GTP] family. As to quaternary structure, monomer. The cofactor is Mn(2+).

It is found in the cytoplasm. The catalysed reaction is oxaloacetate + GTP = phosphoenolpyruvate + GDP + CO2. It participates in carbohydrate biosynthesis; gluconeogenesis. Catalyzes the conversion of oxaloacetate (OAA) to phosphoenolpyruvate (PEP), the rate-limiting step in the metabolic pathway that produces glucose from lactate and other precursors derived from the citric acid cycle. This chain is Phosphoenolpyruvate carboxykinase [GTP], found in Paenarthrobacter aurescens (strain TC1).